The following is a 289-amino-acid chain: GTPase Era (289 aa).

In terms of domain architecture, Era-type G spans 2 to 167; it reads KSGFVSIIGR…LDEICKLLPE (166 aa). The segment at 10–17 is G1; it reads GRTNAGKS. 10–17 is a GTP binding site; that stretch reads GRTNAGKS. The tract at residues 36–40 is G2; the sequence is NATRR. Positions 57–60 are G3; the sequence is DTPG. GTP is bound by residues 57 to 61 and 116 to 119; these read DTPGL and TKVD. Positions 116–119 are G4; it reads TKVD. A G5 region spans residues 146-148; the sequence is FST. The 81-residue stretch at 194–274 folds into the KH type-2 domain; that stretch reads IYENLSDEIP…FLKLDVVVKK (81 aa).

Belongs to the TRAFAC class TrmE-Era-EngA-EngB-Septin-like GTPase superfamily. Era GTPase family. As to quaternary structure, monomer.

It localises to the cytoplasm. It is found in the cell inner membrane. An essential GTPase that binds both GDP and GTP, with rapid nucleotide exchange. Plays a role in 16S rRNA processing and 30S ribosomal subunit biogenesis and possibly also in cell cycle regulation and energy metabolism. This chain is GTPase Era, found in Campylobacter concisus (strain 13826).